Reading from the N-terminus, the 671-residue chain is ABC transporter ATP-binding protein/permease wht-1 (671 aa).

Over 1 to 408 (MHKAPISTLI…SWLTVIRDPN (408 aa)) the chain is Cytoplasmic. An ABC transporter domain is found at 64-310 (TNFVDRFRNN…FEKCGYPCPA (247 aa)). Residue 100 to 107 (GSSGAGKT) participates in ATP binding. Residues 409-429 (LLSVRLLQILITAFITGIVFF) traverse the membrane as a helical segment. Residues 430-451 (QTPVTPATIISINGIMFNHIRN) are Extracellular-facing. The chain crosses the membrane as a helical span at residues 452–472 (MNFMLQFPNVPVITAELPIVL). Over 473–497 (RENANGVYRTSAYFLAKNIAELPQY) the chain is Cytoplasmic. Residues 498 to 518 (IILPILYNTIVYWMSGLYPNF) traverse the membrane as a helical segment. Residues 519 to 525 (WNYCFAS) are Extracellular-facing. A helical membrane pass occupies residues 526–546 (LVTILITNVAISISYAVATIF). Residues 547 to 550 (ANTD) are Cytoplasmic-facing. A helical transmembrane segment spans residues 551–571 (VAMTILPIFVVPIMAFGGFFI). Over 572–644 (TFDAIPSYFK…DFSASHKIFD (73 aa)) the chain is Extracellular. Residues 645–665 (ISILFGMFIGIRIIAYVALLI) form a helical membrane-spanning segment. The Cytoplasmic segment spans residues 666 to 671 (RSYNNT).

Belongs to the ABC transporter superfamily. ABCG family. Eye pigment precursor importer (TC 3.A.1.204) subfamily. Expressed in the intestine in both larvae and adults. Expressed in the gut of males.

It is found in the membrane. Its function is as follows. Required for efficient RNA interference (RNAi). Plays a role in germline development. This chain is ABC transporter ATP-binding protein/permease wht-1, found in Caenorhabditis elegans.